The primary structure comprises 261 residues: tRNA pseudouridine synthase A (261 aa).

D51 acts as the Nucleophile in catalysis. Residue Y109 participates in substrate binding.

This sequence belongs to the tRNA pseudouridine synthase TruA family. Homodimer.

The enzyme catalyses uridine(38/39/40) in tRNA = pseudouridine(38/39/40) in tRNA. Functionally, formation of pseudouridine at positions 38, 39 and 40 in the anticodon stem and loop of transfer RNAs. In Shewanella baltica (strain OS155 / ATCC BAA-1091), this protein is tRNA pseudouridine synthase A.